Consider the following 393-residue polypeptide: NAD(P)H-quinone oxidoreductase subunit H, chloroplastic (393 aa).

It belongs to the complex I 49 kDa subunit family. As to quaternary structure, NDH is composed of at least 16 different subunits, 5 of which are encoded in the nucleus.

It is found in the plastid. It localises to the chloroplast thylakoid membrane. It carries out the reaction a plastoquinone + NADH + (n+1) H(+)(in) = a plastoquinol + NAD(+) + n H(+)(out). It catalyses the reaction a plastoquinone + NADPH + (n+1) H(+)(in) = a plastoquinol + NADP(+) + n H(+)(out). Functionally, NDH shuttles electrons from NAD(P)H:plastoquinone, via FMN and iron-sulfur (Fe-S) centers, to quinones in the photosynthetic chain and possibly in a chloroplast respiratory chain. The immediate electron acceptor for the enzyme in this species is believed to be plastoquinone. Couples the redox reaction to proton translocation, and thus conserves the redox energy in a proton gradient. The chain is NAD(P)H-quinone oxidoreductase subunit H, chloroplastic from Angiopteris evecta (Mule's foot fern).